A 387-amino-acid chain; its full sequence is Exodeoxyribonuclease 7 large subunit (387 aa).

Belongs to the XseA family. As to quaternary structure, heterooligomer composed of large and small subunits.

It localises to the cytoplasm. The catalysed reaction is Exonucleolytic cleavage in either 5'- to 3'- or 3'- to 5'-direction to yield nucleoside 5'-phosphates.. Bidirectionally degrades single-stranded DNA into large acid-insoluble oligonucleotides, which are then degraded further into small acid-soluble oligonucleotides. This is Exodeoxyribonuclease 7 large subunit from Parasynechococcus marenigrum (strain WH8102).